The primary structure comprises 122 residues: Large ribosomal subunit protein uL14c (122 aa).

The protein belongs to the universal ribosomal protein uL14 family. In terms of assembly, part of the 50S ribosomal subunit.

The protein resides in the plastid. It is found in the chloroplast. In terms of biological role, binds to 23S rRNA. The chain is Large ribosomal subunit protein uL14c from Anthoceros angustus (Hornwort).